Consider the following 253-residue polypeptide: Trypsin beta (253 aa).

An N-terminal signal peptide occupies residues 1–22 (MLKFVILLSAVACALGGTIPEG). The propeptide at 23–30 (LLPQLDGR) is activation peptide. The region spanning 31 to 253 (IVGGTATTIS…DLRSWVINNA (223 aa)) is the Peptidase S1 domain. A disulfide bridge links C56 with C72. Catalysis depends on charge relay system residues H71 and D116. 2 cysteine pairs are disulfide-bonded: C180/C197 and C206/C230. S210 acts as the Charge relay system in catalysis.

It belongs to the peptidase S1 family.

It localises to the secreted. Its subcellular location is the extracellular space. The enzyme catalyses Preferential cleavage: Arg-|-Xaa, Lys-|-Xaa.. This is Trypsin beta (betaTry) from Drosophila erecta (Fruit fly).